The following is a 238-amino-acid chain: Uridylate kinase (238 aa).

10–13 (KFSG) serves as a coordination point for ATP. Residues 18-23 (GGNGFG) form an involved in allosteric activation by GTP region. A UMP-binding site is contributed by Gly-52. Residues Gly-53 and Arg-57 each contribute to the ATP site. UMP-binding positions include Asp-73 and 134–141 (TGNPFFTT). ATP-binding residues include Thr-161, Tyr-167, and Asp-170.

It belongs to the UMP kinase family. In terms of assembly, homohexamer.

Its subcellular location is the cytoplasm. It carries out the reaction UMP + ATP = UDP + ADP. It participates in pyrimidine metabolism; CTP biosynthesis via de novo pathway; UDP from UMP (UMPK route): step 1/1. Allosterically activated by GTP. Inhibited by UTP. In terms of biological role, catalyzes the reversible phosphorylation of UMP to UDP. The chain is Uridylate kinase from Campylobacter fetus subsp. fetus (strain 82-40).